Reading from the N-terminus, the 893-residue chain is Dystroglycan 1 (893 aa).

The first 27 residues, 1–27 (MSVDNWLLHPLWGQTFLLLLSVAVAQA), serve as a signal peptide directing secretion. The required for laminin recognition stretch occupies residues 28–406 (HWPSEPSEAV…GQIRPTLTIP (379 aa)). An O-glycosylated at one site region spans residues 47 to 69 (SMHSVLSDFQEAVPTVVGIPDGT). An N-linked (GlcNAc...) asparagine glycan is attached at Asn-139. Cys-180 and Cys-262 are oxidised to a cystine. Residues 314 to 483 (ATPTPVTAIG…PPTRIRTTTS (170 aa)) are mucin-like domain. O-linked (Man6P...) threonine glycosylation is found at Thr-315, Thr-317, and Thr-377. The tract at residues 379–498 (TLGPIQPTRV…GEPNQRPELK (120 aa)) is disordered. Low complexity predominate over residues 409 to 445 (VEPTAVITPPTTTTKKPRVSTPKPATPSTDSSTTTTR). Positions 461–483 (TTKAPITRLETASPPTRIRTTTS) are O-glycosylated at seven sites with GalNAc. Positions 601–710 (KAPARFKARL…LSIAVTGSGS (110 aa)) constitute a Peptidase S72 domain. N-linked (GlcNAc...) asparagine glycans are attached at residues Asn-639, Asn-647, and Asn-659. The Extracellular segment spans residues 652 to 751 (SIVVEWTNNT…SSEDDVYLHT (100 aa)). Cys-667 and Cys-711 are oxidised to a cystine. Residues 722–744 (PSPGSSAAPATEVPDRDPEKSSE) are disordered. The segment covering 734–744 (VPDRDPEKSSE) has biased composition (basic and acidic residues). Residues 752 to 772 (VIPAVVVAAILLIAGIIAMIC) traverse the membrane as a helical segment. Residues 773 to 893 (YRKKRKGKLT…YRSPPPYVPP (121 aa)) are Cytoplasmic-facing. Positions 774 to 780 (RKKRKGK) match the Nuclear localization signal motif. Thr-788 bears the Phosphothreonine mark. The segment at 817 to 893 (LQEEKAPLPP…YRSPPPYVPP (77 aa)) is required for interaction with CAV3. The segment at 821–893 (KAPLPPPEYP…YRSPPPYVPP (73 aa)) is disordered. Over residues 830-844 (PNQSMPETTPLNQDT) the composition is skewed to polar residues. Positions 857 to 868 (NAPPYQPPPPFT) are enriched in pro residues. Residues 878–893 (PKNMTPYRSPPPYVPP) are required for binding DMD and UTRN. The PPXY motif motif lies at 887-890 (PPPY). A Phosphotyrosine; by SRC modification is found at Tyr-890.

In terms of assembly, monomer. Heterodimer of alpha- and beta-dystroglycan subunits which are the central components of the dystrophin-glycoprotein complex. This complex then can form a dystrophin-associated glycoprotein complex (DGC) which is composed of three subcomplexes: a cytoplasmic complex comprised of DMD (or UTRN), DTNA and a number of syntrophins, such as SNTB1, SNTB2, SNTG1 and SNTG2, the transmembrane dystroglycan complex, and the sarcoglycan-sarcospan complex. Interacts (via the N-terminal of alphaDAG1) with LARGE1; the interaction enhances laminin binding. Interacts with SGCD. Interacts with AGR2 and AGR3. Interacts (betaDAG1) with DMD; the interaction is inhibited by phosphorylation on the PPXY motif. Interacts (betaDAG1, via its PPXY motif) with UTRN (via its WWW and ZZ domains); the interaction is inhibited by phosphorylation on the PPXY motif. Interacts (betaDAG1, via its phosphorylated PPXY motif) with the SH2 domain-containing proteins, FYN, CSK, NCK and SHC. Interacts (betaDAG1) with CAV3 (via a central WW-like domain); the interaction disrupts the binding of DMD. BetaDAG1 directly interacts with ANK3, but not with ANK2; this interaction does not interfere with DMD-binding and is required for retention at costameres. Identified in a dystroglycan complex that contains at least PRX, DRP2, UTRN, DMD and DAG1. Interacts with POMGNT1. BetaDAG1 interacts with CD93. O-glycosylated. POMGNT1 catalyzes the initial addition of N-acetylglucosamine, giving rise to the GlcNAc(beta1-2)Man(alpha1-)O-Ser/Thr moiety and thus providing the necessary basis for the addition of further carbohydrate moieties. Heavily O-glycosylated comprising of up to two thirds of its mass and the carbohydrate composition differs depending on tissue type. Mucin-type O-glycosylation is important for ligand binding activity. O-mannosylation is found in high abundance in both brain and muscle where the most abundant glycan is Sia-alpha-2-3-Gal-beta-1-4-Glc-NAc-beta-1-2-Man. In muscle, glycosylation on Thr-315, Thr-317, Thr-379 by a phosphorylated O-mannosyl glycan with the structure 2-(N-acetylamido)-2-deoxygalactosyl-beta-1,3-2-(N-acetylamido)-2-deoxyglucosyl-beta-1,4-6-phosphomannose is mediated by like-acetylglucosaminyltransferase (LARGE1) protein amd is required for laminin binding. O-glycosylated in the N-terminal region with a core 1 or possibly core 8 glycan. The brain form displays a unique glycosylation pattern which is absent in other tissues; this form shows enhanced binding to laminin LAMA5 compared to the skeletal muscle form. Post-translationally, N-glycosylated. In terms of processing, autolytic cleavage produces the alpha and beta subunits. In cutaneous cells, as well as in certain pathological conditions, shedding of beta-dystroglycan can occur releasing a peptide of about 30 kDa. SRC-mediated phosphorylation of the PPXY motif of the beta subunit recruits SH2 domain-containing proteins, but inhibits binding to WWW domain-containing proteins, DMD and UTRN. This phosphorylation also inhibits nuclear entry. As to expression, detected in brain and kidney (at protein level). Detected in sciatic nerve (at protein level). Expressed in neurons and muscle cells (at protein level). Expressed in a variety of tissues. In brain, expressed in the hippocampal formation, the olfactory bulb, the cerebellum and the thalamus. In the peripheral nerve system, expressed in Schwann cells.

Its subcellular location is the secreted. It is found in the extracellular space. The protein localises to the cell membrane. The protein resides in the cytoplasm. It localises to the cytoskeleton. Its subcellular location is the nucleus. It is found in the nucleoplasm. The protein localises to the sarcolemma. The protein resides in the postsynaptic cell membrane. Functionally, the dystroglycan complex is involved in a number of processes including laminin and basement membrane assembly, sarcolemmal stability, cell survival, peripheral nerve myelination, nodal structure, cell migration, and epithelial polarization. In terms of biological role, extracellular peripheral glycoprotein that acts as a receptor for extracellular matrix proteins containing laminin-G domains, and for certain adenoviruses. Receptor for laminin-2 (LAMA2) and agrin in peripheral nerve Schwann cells. Also acts as a receptor for laminin LAMA5. Its function is as follows. Transmembrane protein that plays important roles in connecting the extracellular matrix to the cytoskeleton. Acts as a cell adhesion receptor in both muscle and non-muscle tissues. Receptor for both DMD and UTRN and, through these interactions, scaffolds axin to the cytoskeleton. Also functions in cell adhesion-mediated signaling and implicated in cell polarity. In Mus musculus (Mouse), this protein is Dystroglycan 1.